Here is a 363-residue protein sequence, read N- to C-terminus: DNA replication and repair protein RecF (363 aa).

30–37 (GPNGSGKT) is a binding site for ATP.

Belongs to the RecF family.

The protein resides in the cytoplasm. The RecF protein is involved in DNA metabolism; it is required for DNA replication and normal SOS inducibility. RecF binds preferentially to single-stranded, linear DNA. It also seems to bind ATP. The polypeptide is DNA replication and repair protein RecF (Chlorobium phaeobacteroides (strain BS1)).